A 243-amino-acid chain; its full sequence is Triosephosphate isomerase (243 aa).

Residue 9 to 11 (NWK) coordinates substrate. The active-site Electrophile is His98. Glu167 acts as the Proton acceptor in catalysis. Substrate-binding positions include Gly173, Ser205, and 226–227 (GG).

It belongs to the triosephosphate isomerase family. As to quaternary structure, homodimer.

It localises to the cytoplasm. It carries out the reaction D-glyceraldehyde 3-phosphate = dihydroxyacetone phosphate. It participates in carbohydrate biosynthesis; gluconeogenesis. It functions in the pathway carbohydrate degradation; glycolysis; D-glyceraldehyde 3-phosphate from glycerone phosphate: step 1/1. Functionally, involved in the gluconeogenesis. Catalyzes stereospecifically the conversion of dihydroxyacetone phosphate (DHAP) to D-glyceraldehyde-3-phosphate (G3P). In Mesomycoplasma hyorhinis (Mycoplasma hyorhinis), this protein is Triosephosphate isomerase.